A 941-amino-acid polypeptide reads, in one-letter code: Glycine dehydrogenase (decarboxylating) (941 aa).

Residue Lys-692 is modified to N6-(pyridoxal phosphate)lysine.

It belongs to the GcvP family. In terms of assembly, the glycine cleavage system is composed of four proteins: P, T, L and H. It depends on pyridoxal 5'-phosphate as a cofactor.

The catalysed reaction is N(6)-[(R)-lipoyl]-L-lysyl-[glycine-cleavage complex H protein] + glycine + H(+) = N(6)-[(R)-S(8)-aminomethyldihydrolipoyl]-L-lysyl-[glycine-cleavage complex H protein] + CO2. In terms of biological role, the glycine cleavage system catalyzes the degradation of glycine. The P protein binds the alpha-amino group of glycine through its pyridoxal phosphate cofactor; CO(2) is released and the remaining methylamine moiety is then transferred to the lipoamide cofactor of the H protein. This Mycobacterium avium (strain 104) protein is Glycine dehydrogenase (decarboxylating).